We begin with the raw amino-acid sequence, 736 residues long: MPKYKTSEQVLSLMKDRTRVRNIGIIAHVDHGKTTTSDQLLAASGIISPKVAGEALALDYLSVEQQRGITVKAANVSLYHEVEGKGYVINLIDTPGHVDFSGRVTRSLRVLDGSIVVVDSVEGVMTQTETVLRQSLEERVRPILFVNKVDRLVKELKLGPQEMMQKLMDIIKEVNNLINIYAEPELKEKWAINPTLGNVVFGSAKDRWGFSIPMAQKKGINMKHVIDAYSTTDKTKINELASQVPINEALLDAVIKFVPNPVDAQKYRIPKIWKGDLDNELAKSMLNADPNGPVVMMITDMKVDPHAGLVATGRVFSGTIRPGSEVWLVNAKAPQKVLQVSIYMGQFRELADEIPAGNIAAVLGLERARSGETLIDIRYKDLQGSFEKLHYVSEPVVTIAVEPKNPKDLTKMIDALRKLSIEDPNLVVKINEETGEYLLSGMGFLHVEVSLQLLKDNYGVDVVTTPPIVVYRESVRNKSQVFEGKSPNKHNKFYISVEPLNDKTIELISNGTIKEDMDSKEMAKILRDQADWDYDEAKKIIAIDENVNVLIDATSGVQHLREIMDTMLQGYRLAMREGPLAHEPIRGVKVILHDATIHEDPAHRGPAQIYPAVRNAIFAAMLMSKPTLLEPLQKLDIRVPMEFVGNVTAVLSRKRGKVLNMTQSGSVARILAEIPVSESYELASDLRGSTGGRAFWGTEFSKWAPVPDSILTDVILKIRERKGLPKELPKVEDFLS.

In terms of domain architecture, tr-type G spans 18-262; the sequence is TRVRNIGIIA…AVIKFVPNPV (245 aa). GTP-binding positions include 27 to 34, 93 to 97, and 147 to 150; these read AHVDHGKT, DTPGH, and NKVD. Histidine 603 is modified (diphthamide).

Belongs to the TRAFAC class translation factor GTPase superfamily. Classic translation factor GTPase family. EF-G/EF-2 subfamily.

Its subcellular location is the cytoplasm. In terms of biological role, catalyzes the GTP-dependent ribosomal translocation step during translation elongation. During this step, the ribosome changes from the pre-translocational (PRE) to the post-translocational (POST) state as the newly formed A-site-bound peptidyl-tRNA and P-site-bound deacylated tRNA move to the P and E sites, respectively. Catalyzes the coordinated movement of the two tRNA molecules, the mRNA and conformational changes in the ribosome. The sequence is that of Elongation factor 2 from Metallosphaera sedula (strain ATCC 51363 / DSM 5348 / JCM 9185 / NBRC 15509 / TH2).